The following is a 185-amino-acid chain: MVEAGDFRRGLTIEYDGQIFQVIEFLHVKPGKGAAFVRTKLKNIKTGAVIEKTFRPDERMPLAHIERREMQYLYNDGELYYFMDTQTYEQIALNQEMVGDALKFVKENMTVTVLSHNGVVFGVEPPRFVELEVIDTEPGFKGDTQTGATKPAKVETGAVIQVPLFINVGDKIKIDTSTEEYLSRV.

This sequence belongs to the elongation factor P family.

It localises to the cytoplasm. It participates in protein biosynthesis; polypeptide chain elongation. Its function is as follows. Involved in peptide bond synthesis. Stimulates efficient translation and peptide-bond synthesis on native or reconstituted 70S ribosomes in vitro. Probably functions indirectly by altering the affinity of the ribosome for aminoacyl-tRNA, thus increasing their reactivity as acceptors for peptidyl transferase. The sequence is that of Elongation factor P from Caldicellulosiruptor bescii (strain ATCC BAA-1888 / DSM 6725 / KCTC 15123 / Z-1320) (Anaerocellum thermophilum).